We begin with the raw amino-acid sequence, 148 residues long: UPF0756 membrane protein YeaL (148 aa).

Helical transmembrane passes span 14 to 34 (ALGFISHNTTVAVSILVLIIV), 51 to 71 (LTVGIIILTIGVMAPIASGTL), 86 to 106 (LVAIAVGVFVSWLGGRGITLM), and 121 to 141 (VLGVALFRGVPVGPLIAAGLV).

This sequence belongs to the UPF0756 family.

The protein resides in the cell membrane. This is UPF0756 membrane protein YeaL from Salmonella choleraesuis (strain SC-B67).